The following is a 302-amino-acid chain: Probable protein ABIL4 (302 aa).

Disordered stretches follow at residues 151 to 179 and 220 to 256; these read PSTGHKRTQAARLQTDNGQDSKPKPYPSA and LLGKDIPASPMHKPLQPNGNTSFDAKKNVGSKDQPGF. A compositionally biased stretch (polar residues) spans 161–170; it reads ARLQTDNGQD.

This sequence belongs to the ABI family. In terms of assembly, binds SCAR.

The protein localises to the cytoplasm. It is found in the cytoskeleton. Its function is as follows. Involved in regulation of actin and microtubule organization. Part of a WAVE complex that activates the Arp2/3 complex. The sequence is that of Probable protein ABIL4 from Oryza sativa subsp. japonica (Rice).